The primary structure comprises 225 residues: Late embryogenesis abundant protein 29 (225 aa).

Disordered stretches follow at residues 1-167 (MASN…GGFL) and 193-225 (TEEE…YQRK). Basic and acidic residues-rich tracts occupy residues 28–39 (MRDKAEEGRDKT), 49–61 (KAHE…KDKT), 71–83 (KAHE…KEKT), and 93–119 (KAHE…KDKA). LEA 11-mer repeat repeat units follow at residues 53–63 (TAQSAKDKTSQ), 75–85 (TAQSAKEKTSQ), and 97–107 (TTQAAKEKTSQ). Residues 141 to 153 (TKETAQGAAQYTK) are compositionally biased toward polar residues. Basic and acidic residues predominate over residues 154-163 (ETAEAGRDKT). A compositionally biased stretch (low complexity) spans 205-225 (TTTTTATTRTTDPTHQTYQRK).

Belongs to the LEA type 4 family.

It localises to the cytoplasm. Its subcellular location is the cytosol. Its function is as follows. Involved dehydration tolerance. The protein is Late embryogenesis abundant protein 29 of Arabidopsis thaliana (Mouse-ear cress).